The primary structure comprises 496 residues: E3 ubiquitin-protein ligase Hakai (496 aa).

The disordered stretch occupies residues 35–60 (PNKIKPAPRPQRNMNRIPTKPQPGFD). The segment at 104–144 (CDKCGLPIKIYGRMIPCKHVFCYDCALMHEKKADKLCPGTL) adopts an RING-type; degenerate zinc-finger fold. Positions 157–215 (CNDPVQRIEQCARGSLFMCSIVQGCKRTYLSQRDLQAHINHRHMRASKPTARPQPEPIH) are HYB domain. The C2H2-type zinc-finger motif lies at 173 to 199 (FMCSIVQGCKRTYLSQRDLQAHINHRH). Residues 304-314 (VPIQDDSNSGA) are compositionally biased toward polar residues. The tract at residues 304–496 (VPIQDDSNSG…DQARYRPYYQ (193 aa)) is disordered. Composition is skewed to pro residues over residues 350–360 (APPPPPPPPIS), 380–397 (GPPPPMTTAPPPITPPPG), and 407–430 (MNHPPPGPPPQHGGPPVNAPPPHH). Positions 434–449 (SSMPQFNEDQGTLSPP) are enriched in polar residues. Positions 464 to 483 (PRGPPPRMQGPPSQAPMPGP) are enriched in pro residues.

Belongs to the Hakai family. As to quaternary structure, homodimer. Interacts with tyrosine-phosphorylated SRC substrates. Component of the WMM complex, a N6-methyltransferase complex composed of a catalytic subcomplex, named MAC, and of an associated subcomplex, named MACOM. Component of the MACOM subcomplex.

The protein localises to the nucleus speckle. It is found in the nucleus. Its subcellular location is the nucleoplasm. It carries out the reaction S-ubiquitinyl-[E2 ubiquitin-conjugating enzyme]-L-cysteine + [acceptor protein]-L-lysine = [E2 ubiquitin-conjugating enzyme]-L-cysteine + N(6)-ubiquitinyl-[acceptor protein]-L-lysine.. It functions in the pathway protein modification; protein ubiquitination. In terms of biological role, E3 ubiquitin-protein ligase that mediates ubiquitination of several tyrosine-phosphorylated Src substrates. Associated component of the WMM complex, a complex that mediates N6-methyladenosine (m6A) methylation of RNAs, a modification that plays a role in the efficiency of mRNA splicing and RNA processing. The polypeptide is E3 ubiquitin-protein ligase Hakai (Xenopus laevis (African clawed frog)).